The sequence spans 85 residues: Alpha-toxin BmalphaTx47 (85 aa).

An N-terminal signal peptide occupies residues methionine 1–serine 19. Positions arginine 21–arginine 83 constitute an LCN-type CS-alpha/beta domain. 4 disulfide bridges follow: cysteine 31–cysteine 82, cysteine 35–cysteine 55, cysteine 41–cysteine 65, and cysteine 45–cysteine 67.

The protein belongs to the long (4 C-C) scorpion toxin superfamily. Sodium channel inhibitor family. Alpha subfamily. Expressed by the venom gland.

It is found in the secreted. Its function is as follows. Alpha toxins bind voltage-independently at site-3 of sodium channels (Nav) and inhibit the inactivation of the activated channels, thereby blocking neuronal transmission. This toxin expressed with the pET-14b vector has low inhibitory activity on sodium channels (11.33% on rNav1.2/SCN2A, 15.96% on mNav1.4/SCN4A and 5.04% on hNav1.5/SCN5A). When expressed with the pET-28a vector, this toxin has higher inhibitory activities (44.12% on rNav1.2/SCN2A, 25.40% on mNav1.4/SCN4A and 65.34% on hNav1.5/SCN5A). This Olivierus martensii (Manchurian scorpion) protein is Alpha-toxin BmalphaTx47.